Reading from the N-terminus, the 217-residue chain is Frataxin, mitochondrial (217 aa).

The N-terminal 42 residues, 1 to 42 (MWTLGRRSVASFLPRSALPGFAPTRAGAPRPAKDLSLSGLPG), are a transit peptide targeting the mitochondrion.

It belongs to the frataxin family. Component of the mitochondrial core iron-sulfur cluster (ISC) complex composed of NFS1, LYRM4, NDUFAB1, ISCU, FXN, and FDX2; this complex is a heterohexamer containing two copies of each monomer. Homodimer. Monomer (probable predominant form). Oligomer. Monomers and polymeric aggregates of &gt;1 MDa have been isolated from mitochondria. A small fraction of heterologous overexpressed recombinant frataxin forms high-molecular weight aggregates that incorporate iron. Interacts with LYRM4. Interacts (via ferrous form) with ISCU; the interaction is possible when both are bound to the dimeric form of the cysteine desulfurase complex (NFS1:LYRM4) and the interaction enhances FXN interaction to the dimeric form of the cysteine desulfurase complex (NFS1:LYRM4). Interacts with FECH; one iron-bound FXN monomer seems to interact with a FECH homodimer. Interacts with SDHA and SDHB. Interacts with ACO2; the interaction is dependent on citrate. Interacts with HSPA9. As to quaternary structure, interacts with ACO1. Interacts with ISCU (cytoplasmic form). Processed in two steps by mitochondrial processing peptidase (MPP). MPP first cleaves the precursor to intermediate form and subsequently converts the intermediate to yield frataxin mature form (frataxin(81-210)) which is the predominant form. The additional forms, frataxin(56-210) and frataxin(78-210), seem to be produced when the normal maturation process is impaired; their physiological relevance is unsure.

It is found in the mitochondrion. The protein localises to the cytoplasm. The protein resides in the cytosol. The enzyme catalyses 4 Fe(2+) + O2 + 4 H(+) = 4 Fe(3+) + 2 H2O. Its function is as follows. Functions as an activator of persulfide transfer to the scaffoding protein ISCU as component of the core iron-sulfur cluster (ISC) assembly complex and participates to the [2Fe-2S] cluster assembly. Accelerates sulfur transfer from NFS1 persulfide intermediate to ISCU and to small thiols such as L-cysteine and glutathione leading to persulfuration of these thiols and ultimately sulfide release. Binds ferrous ion and is released from FXN upon the addition of both L-cysteine and reduced FDX2 during [2Fe-2S] cluster assembly. The core iron-sulfur cluster (ISC) assembly complex is involved in the de novo synthesis of a [2Fe-2S] cluster, the first step of the mitochondrial iron-sulfur protein biogenesis. This process is initiated by the cysteine desulfurase complex (NFS1:LYRM4:NDUFAB1) that produces persulfide which is delivered on the scaffold protein ISCU in a FXN-dependent manner. Then this complex is stabilized by FDX2 which provides reducing equivalents to accomplish the [2Fe-2S] cluster assembly. Finally, the [2Fe-2S] cluster is transferred from ISCU to chaperone proteins, including HSCB, HSPA9 and GLRX5. May play a role in the protection against iron-catalyzed oxidative stress through its ability to catalyze the oxidation of Fe(2+) to Fe(3+); the oligomeric form but not the monomeric form has in vitro ferroxidase activity. May be able to store large amounts of iron in the form of a ferrihydrite mineral by oligomerization; however, the physiological relevance is unsure as reports are conflicting and the function has only been shown using heterologous overexpression systems. May function as an iron chaperone protein that protects the aconitase [4Fe-4S]2+ cluster from disassembly and promotes enzyme reactivation. May play a role as a high affinity iron binding partner for FECH that is capable of both delivering iron to ferrochelatase and mediating the terminal step in mitochondrial heme biosynthesis. In terms of biological role, modulates the RNA-binding activity of ACO1. May be involved in the cytoplasmic iron-sulfur protein biogenesis. May contribute to oxidative stress resistance and overall cell survival. The chain is Frataxin, mitochondrial from Bos taurus (Bovine).